We begin with the raw amino-acid sequence, 257 residues long: Phycoerythrobilin:ferredoxin oxidoreductase (257 aa).

Belongs to the HY2 family.

The enzyme catalyses (3Z)-phycoerythrobilin + oxidized 2[4Fe-4S]-[ferredoxin] = 15,16-dihydrobiliverdin + reduced 2[4Fe-4S]-[ferredoxin] + 2 H(+). In terms of biological role, catalyzes the two-electron reduction of the C2 and C3(1) diene system of 15,16-dihydrobiliverdin. This Synechococcus sp. (strain WH8020) protein is Phycoerythrobilin:ferredoxin oxidoreductase (pebB).